The chain runs to 221 residues: GTP cyclohydrolase 1 (221 aa).

Zn(2+) is bound by residues Cys111, His114, and Cys182.

It belongs to the GTP cyclohydrolase I family. As to quaternary structure, homomer.

The catalysed reaction is GTP + H2O = 7,8-dihydroneopterin 3'-triphosphate + formate + H(+). The protein operates within cofactor biosynthesis; 7,8-dihydroneopterin triphosphate biosynthesis; 7,8-dihydroneopterin triphosphate from GTP: step 1/1. The polypeptide is GTP cyclohydrolase 1 (Erwinia tasmaniensis (strain DSM 17950 / CFBP 7177 / CIP 109463 / NCPPB 4357 / Et1/99)).